The sequence spans 189 residues: Putative zinc finger protein ORF189 (189 aa).

The C2H2-type zinc-finger motif lies at 114-137 (YVCPYCVSRFPTVRALKIHLKRRH).

This chain is Putative zinc finger protein ORF189, found in Acidianus two-tailed virus (ATV).